The following is a 397-amino-acid chain: Serpin B10 (397 aa).

The Nuclear localization signal motif lies at 74–77 (KKRK).

Belongs to the serpin family. Ov-serpin subfamily.

It is found in the nucleus. Its subcellular location is the cytoplasm. In terms of biological role, protease inhibitor that may play a role in the regulation of protease activities during hematopoiesis and apoptosis induced by TNF. May regulate protease activities in the cytoplasm and in the nucleus. This Bos taurus (Bovine) protein is Serpin B10 (SERPINB10).